The chain runs to 352 residues: Ketoisovalerate oxidoreductase subunit VorB (352 aa).

In terms of assembly, heterotrimer of the VorA, VorB and VorC subunits.

The enzyme catalyses 3-methyl-2-oxobutanoate + 2 oxidized [2Fe-2S]-[ferredoxin] + CoA = 2-methylpropanoyl-CoA + 2 reduced [2Fe-2S]-[ferredoxin] + CO2 + H(+). This is Ketoisovalerate oxidoreductase subunit VorB (vorB) from Methanothermobacter marburgensis (strain ATCC BAA-927 / DSM 2133 / JCM 14651 / NBRC 100331 / OCM 82 / Marburg) (Methanobacterium thermoautotrophicum).